A 426-amino-acid chain; its full sequence is Glutamate-1-semialdehyde 2,1-aminomutase (426 aa).

Residue lysine 265 is modified to N6-(pyridoxal phosphate)lysine.

It belongs to the class-III pyridoxal-phosphate-dependent aminotransferase family. HemL subfamily. Homodimer. Pyridoxal 5'-phosphate serves as cofactor.

The protein resides in the cytoplasm. The enzyme catalyses (S)-4-amino-5-oxopentanoate = 5-aminolevulinate. It functions in the pathway porphyrin-containing compound metabolism; protoporphyrin-IX biosynthesis; 5-aminolevulinate from L-glutamyl-tRNA(Glu): step 2/2. The chain is Glutamate-1-semialdehyde 2,1-aminomutase from Methylococcus capsulatus (strain ATCC 33009 / NCIMB 11132 / Bath).